The primary structure comprises 45 residues: Globin, minor monomeric component (45 aa).

The Globin domain occupies 1-45 (GLSAAERQVVASCWKDIAGADXGAGVGKEXLIKFISAAPEMAAVF).

It belongs to the globin family. As to quaternary structure, monomer.

This is Globin, minor monomeric component from Glycera dibranchiata (Bloodworm).